The sequence spans 1387 residues: Kinesin-like protein KIF15-B (1387 aa).

Residues 26 to 364 (AIKVFVRIRP…LQFAQRAKLI (339 aa)) enclose the Kinesin motor domain. 110–117 (GQTGSGKT) serves as a coordination point for ATP. Residues 369-1383 (VVNEDTQGNV…NLFLKETKKC (1015 aa)) adopt a coiled-coil conformation. Positions 1138–1387 (NSPVVLAQTP…KETKKCEHCD (250 aa)) are necessary for its targeting to microtubule minus ends.

This sequence belongs to the TRAFAC class myosin-kinesin ATPase superfamily. Kinesin family. KLP2 subfamily. Homodimer. Dimerization is required for targeting to microtubule minus ends. Found in a complex with tpx2 and microtubules. Its association with microtubules and targeting to microtubule minus ends requires tpx2. In terms of tissue distribution, strongly expressed in testis and weakly in lung (at protein level).

It localises to the cytoplasm. The protein localises to the cytoskeleton. It is found in the microtubule organizing center. The protein resides in the centrosome. Its subcellular location is the spindle. It localises to the spindle pole. Plus-end directed kinesin-like motor enzyme involved in mitotic spindle assembly. Required for centrosome separation and maintenance of spindle bipolarity during mitosis. This Xenopus laevis (African clawed frog) protein is Kinesin-like protein KIF15-B (kif15-b).